A 266-amino-acid chain; its full sequence is METFQVILLALIQGLTEFLPISSSAHLILPSQILGWADQGLSFDVAVNTGSLFAVVIYFRHEIVVLAKAWFTSLASKQQTQESKLAWWIILATIPAVIVGFTAKDFIETHFRNTLVIAITTIVFGLLLWAADRMSKAQLTEFQMGWKKALLIGLAQAMALIPGTSRSGATMTAALMLGLTRDAAARFSFLMSVPVSFGAALLVTKDLVSSPAPIDYQALGLGIVVSFVAAYLCIHFFLKFISKIGMTPFVLYRLALGAILLGLLYL.

Helical transmembrane passes span 1-21 (METF…FLPI), 39-59 (QGLS…VIYF), 87-107 (WWII…KDFI), 111-131 (FRNT…LWAA), 144-164 (MGWK…IPGT), 183-203 (AAAR…ALLV), 218-238 (ALGL…HFFL), and 244-264 (IGMT…LGLL).

It belongs to the UppP family.

It is found in the cell inner membrane. The enzyme catalyses di-trans,octa-cis-undecaprenyl diphosphate + H2O = di-trans,octa-cis-undecaprenyl phosphate + phosphate + H(+). Catalyzes the dephosphorylation of undecaprenyl diphosphate (UPP). Confers resistance to bacitracin. This Shewanella frigidimarina (strain NCIMB 400) protein is Undecaprenyl-diphosphatase.